The chain runs to 269 residues: Xyloglucan endotransglucosylase/hydrolase protein 24 (269 aa).

A signal peptide spans 1–21; sequence MSPFKIFFFTTLLVAAFSVSA. The region spanning 22 to 212 is the GH16 domain; that stretch reads ADFNTDVNVA…WSKAPFMASY (191 aa). Catalysis depends on glutamate 98, which acts as the Nucleophile. Residue glutamate 102 is the Proton donor of the active site. A xyloglucan-binding site is contributed by glutamate 102. N-linked (GlcNAc...) asparagine glycosylation is present at asparagine 106. Xyloglucan contacts are provided by residues 115–117, 125–127, 191–192, glycine 196, and arginine 256; these read HTN, DKE, and DW. The cysteines at positions 251 and 265 are disulfide-linked.

This sequence belongs to the glycosyl hydrolase 16 family. XTH group 2 subfamily. In terms of processing, contains at least one intrachain disulfide bond essential for its enzymatic activity. Post-translationally, N-glycosylated; essential for its enzymatic activity. Highly expressed. Predominantly expressed in stems. Expressed in shoot apical meristems, also found in seedlings and meristems.

It is found in the secreted. Its subcellular location is the cell wall. The protein localises to the extracellular space. It localises to the apoplast. The enzyme catalyses breaks a beta-(1-&gt;4) bond in the backbone of a xyloglucan and transfers the xyloglucanyl segment on to O-4 of the non-reducing terminal glucose residue of an acceptor, which can be a xyloglucan or an oligosaccharide of xyloglucan.. Functionally, catalyzes xyloglucan endohydrolysis (XEH) and/or endotransglycosylation (XET). Cleaves and religates xyloglucan polymers, an essential constituent of the primary cell wall, and thereby participates in cell wall construction of growing tissues. May be required during development to modify the walls of cells under mechanical stress. The protein is Xyloglucan endotransglucosylase/hydrolase protein 24 (XTH24) of Arabidopsis thaliana (Mouse-ear cress).